Reading from the N-terminus, the 298-residue chain is UPF0696 protein C11orf68 homolog (298 aa).

Over residues 1–10 the composition is skewed to low complexity; that stretch reads MAAAAAAVAG. The segment at 1 to 66 is disordered; it reads MAAAAAAVAG…EDSPGGREDG (66 aa). The span at 11–25 shows a compositional bias: gly residues; that stretch reads AGRGGGGGGGGGGAA. Residues 41–50 are compositionally biased toward basic and acidic residues; that stretch reads ERSEGRRMEP.

This sequence belongs to the UPF0696 family.

This Mus musculus (Mouse) protein is UPF0696 protein C11orf68 homolog (Bles03).